A 659-amino-acid polypeptide reads, in one-letter code: MSNQAQDQPERRDSSSENSSPFKDDEVAADQSVSAHGNTSLNKKDRVSAVRDADASSAREGQQPGVTRIEALYRIFPRNSPIVYTVYASLAAVTICFALDQSTTAAYQLYATRTLGSHAKLFGVIATVEAILNAVSKPFIAKICDIFSRQTAYFLVAVFYTIGFVVVASAQTPAAFAVGRIITEVGQAGFDLVTDIVVADLSPLEWRGVVTALTSSPFIVLPWVGNLIQARLNTGRPEGWRWGYGMFAIMAPVCVAPIILVLMYVDRKAQKAGELSFASSRLETRRAQEQGTVKVQRDSLRDRFANLVQLCKEMDLVGLFLLALSFSLLLVPFSIYKDADKQWRNPSIIAMFVCGGVILGMFLAWEILLASHPVMNKRVWYNRTFLLAVTIDIFYFMGGNARSTYYGSFVLVGTNLSTANWGYVVNALATCALSVFGLAAGFYLRIFHRYKFLQIGGLVIRIVAMGLYLYGRNGNLTTMVVAWSQILNSLGGACSVVGTRVASQASVPHQDLASIISQLALWTRLGGAIGSAIAAGIWTGTLPDYLAATNLTPAQQSRAYNSPTTIKTSYPWNTPLRNQINQAFSKTMKPIFIVALVLAFIPLFAGLLMPNYYLGKTQNAVDGTDNSGRVIESAEDNPNAEINRKNVKYAKGTRLSWLW.

Residues 1–62 (MSNQAQDQPE…ADASSAREGQ (62 aa)) form a disordered region. A compositionally biased stretch (polar residues) spans 31–41 (QSVSAHGNTSL). An N-linked (GlcNAc...) asparagine glycan is attached at Asn-38. The span at 42-54 (NKKDRVSAVRDAD) shows a compositional bias: basic and acidic residues. Helical transmembrane passes span 79-99 (NSPIVYTVYASLAAVTICFAL), 121-141 (LFGVIATVEAILNAVSKPFIA), 150-170 (QTAYFLVAVFYTIGFVVVASA), 208-228 (GVVTALTSSPFIVLPWVGNLI), 245-265 (GMFAIMAPVCVAPIILVLMYV), 316-336 (LVGLFLLALSFSLLLVPFSIY), 348-368 (IIAMFVCGGVILGMFLAWEIL), and 379-399 (VWYNRTFLLAVTIDIFYFMGG). The N-linked (GlcNAc...) asparagine glycan is linked to Asn-415. A run of 2 helical transmembrane segments spans residues 424–444 (VVNALATCALSVFGLAAGFYL) and 451–471 (KFLQIGGLVIRIVAMGLYLYG). Asn-475 carries an N-linked (GlcNAc...) asparagine glycan. The next 3 helical transmembrane spans lie at 478–498 (TMVVAWSQILNSLGGACSVVG), 528–548 (AIGSAIAAGIWTGTLPDYLAA), and 590–610 (PIFIVALVLAFIPLFAGLLMP).

The protein belongs to the major facilitator superfamily.

Its subcellular location is the membrane. In terms of biological role, siderophore transporter; part of the gene cluster that mediates the biosynthesis of siderophore ferrichrome A which is contributing to organismal virulence. In Mycosarcoma maydis (Corn smut fungus), this protein is Siderophore transporter fer7.